The chain runs to 1241 residues: DNA-directed RNA polymerase subunit beta (1241 aa).

Positions 1201–1224 (AEEEQDTDVDYITEDDFESPDPEI) are disordered.

The protein belongs to the RNA polymerase beta chain family. As to quaternary structure, the RNAP catalytic core consists of 2 alpha, 1 beta, 1 beta' and 1 omega subunit. When a sigma factor is associated with the core the holoenzyme is formed, which can initiate transcription.

The catalysed reaction is RNA(n) + a ribonucleoside 5'-triphosphate = RNA(n+1) + diphosphate. Its function is as follows. DNA-dependent RNA polymerase catalyzes the transcription of DNA into RNA using the four ribonucleoside triphosphates as substrates. In Alkaliphilus oremlandii (strain OhILAs) (Clostridium oremlandii (strain OhILAs)), this protein is DNA-directed RNA polymerase subunit beta.